A 173-amino-acid polypeptide reads, in one-letter code: MSTSAVLFLLLAVFAAGASAATFNIKNNCGSTIWPAGIPVGGGFELGSGQTSSINVPAGTQAGRIWARTGCSFNGGSGSCQTGDCGGQLSCSLSGRPPATLAEFTIGGGSTQDFYDISVIDGFNLAMDFSCSTGDALQCRDPSCPPPQAYQHPNDVATHACSGNNNYQITFCP.

An N-terminal signal peptide occupies residues 1–20 (MSTSAVLFLLLAVFAAGASA).

This sequence belongs to the thaumatin family.

The chain is Pathogenesis-related protein 1C from Hordeum vulgare (Barley).